The following is a 234-amino-acid chain: 2-C-methyl-D-erythritol 4-phosphate cytidylyltransferase (234 aa).

This sequence belongs to the IspD/TarI cytidylyltransferase family. IspD subfamily.

It catalyses the reaction 2-C-methyl-D-erythritol 4-phosphate + CTP + H(+) = 4-CDP-2-C-methyl-D-erythritol + diphosphate. It participates in isoprenoid biosynthesis; isopentenyl diphosphate biosynthesis via DXP pathway; isopentenyl diphosphate from 1-deoxy-D-xylulose 5-phosphate: step 2/6. Catalyzes the formation of 4-diphosphocytidyl-2-C-methyl-D-erythritol from CTP and 2-C-methyl-D-erythritol 4-phosphate (MEP). The sequence is that of 2-C-methyl-D-erythritol 4-phosphate cytidylyltransferase from Pseudomonas aeruginosa (strain ATCC 15692 / DSM 22644 / CIP 104116 / JCM 14847 / LMG 12228 / 1C / PRS 101 / PAO1).